The following is a 270-amino-acid chain: FKBP-type peptidyl-prolyl cis-trans isomerase FkpA (270 aa).

An N-terminal signal peptide occupies residues 1–25; the sequence is MKSLFKVTLLATTMAVALHAPITFA. The PPIase FKBP-type domain occupies 164 to 249; it reads SDTVVVNYKG…VFDVELLDVK (86 aa).

Belongs to the FKBP-type PPIase family.

Its subcellular location is the periplasm. It catalyses the reaction [protein]-peptidylproline (omega=180) = [protein]-peptidylproline (omega=0). PPIases accelerate the folding of proteins. It catalyzes the cis-trans isomerization of proline imidic peptide bonds in oligopeptides. The sequence is that of FKBP-type peptidyl-prolyl cis-trans isomerase FkpA (fkpA) from Escherichia coli O157:H7.